A 781-amino-acid chain; its full sequence is Chloride channel protein CLC-f (781 aa).

Disordered regions lie at residues 1 to 41 (MSSG…QSPA) and 79 to 98 (RERHNPSSSSAFSAAGEEDG). A compositionally biased stretch (basic and acidic residues) spans 10–20 (NEDRHLLRSTD). The next 12 helical transmembrane spans lie at 129 to 149 (WALLLIGCLIGVAAGICVAGF), 184 to 204 (ILLIPVTGGVIVGMMHGLLEI), 221 to 241 (FLAGIYPVIKAIQAAVTLGTG), 250 to 270 (SVDIGKSCANGFALMMENNRE), 279 to 299 (GAASGIASGFNAAVAGCFFAI), 314 to 334 (FTTAMIILASVISSTVSNALL), 350 to 370 (AAELPLYLILGMLCGAVSVVF), 388 to 408 (FGLPAIVCPALGGLGAGIIAL), 433 to 453 (APGIWLLAQLAAAKVVATALC), 457 to 477 (GLVGGLYAPSLMIGAAVGAVF), 502 to 522 (ALVGMAATLASMCSVPLTSVL), and 523 to 543 (LLFELTKDYRILLPLMGAVGL). Positions 553–584 (QGKESDSSEGRSTGRGYSSLSPSERKTEGVWR) are disordered. Residues 575-584 (SERKTEGVWR) are compositionally biased toward basic and acidic residues. CBS domains are found at residues 621-677 (MSKN…NAST) and 699-763 (QERG…EMSR). A helical transmembrane segment spans residues 726 to 746 (QLPVVKRGEVIHKGKRRKLLG).

This sequence belongs to the chloride channel (TC 2.A.49) family. Homodimer.

It is found in the membrane. Its function is as follows. Voltage-gated chloride channel. The chain is Chloride channel protein CLC-f (CLC-F) from Arabidopsis thaliana (Mouse-ear cress).